Here is a 232-residue protein sequence, read N- to C-terminus: MSSTPAAGSAAEVATSSATSNAPSAPSTTASNVSNTSQPTTAGTPQARGGRGSNANGGASGSNAGGGDEPRKEAKTTPRISRALGTSAKRIQKELAEITLDPPPNCSAGPKGDNLYEWVSTILGPPGSVYEGGVFFLDIHFSPEYPFKPPKVTFRTRIYHCNINSQGVICLDILKDNWSPALTISKVLLSICSLLTDCNPADPLVGSIATQYLQNREEHDRIARLWTKRYAT.

Positions 1 to 37 (MSSTPAAGSAAEVATSSATSNAPSAPSTTASNVSNTS) are enriched in low complexity. Residues 1 to 87 (MSSTPAAGSA…PRISRALGTS (87 aa)) are disordered. A compositionally biased stretch (gly residues) spans 58–67 (GASGSNAGGG). The 147-residue stretch at 86–232 (TSAKRIQKEL…ARLWTKRYAT (147 aa)) folds into the UBC core domain. Cysteine 170 functions as the Glycyl thioester intermediate in the catalytic mechanism.

It belongs to the ubiquitin-conjugating enzyme family.

It carries out the reaction S-ubiquitinyl-[E1 ubiquitin-activating enzyme]-L-cysteine + [E2 ubiquitin-conjugating enzyme]-L-cysteine = [E1 ubiquitin-activating enzyme]-L-cysteine + S-ubiquitinyl-[E2 ubiquitin-conjugating enzyme]-L-cysteine.. It functions in the pathway protein modification; protein ubiquitination. Catalyzes the covalent attachment of ubiquitin to other proteins. In Drosophila melanogaster (Fruit fly), this protein is Ubiquitin-conjugating enzyme E2-24 kDa.